Reading from the N-terminus, the 62-residue chain is Keratin-associated protein 19-5 (62 aa).

Residues 5-56 (GSYYGGLGSGIRGFGNLGYGYGCGCGFGGYGYGSGYGRYGYGYPRPLYYGGY) form a 14 X 2 AA repeats of G-[YCGS] region.

This sequence belongs to the KRTAP type 19 family. As to quaternary structure, interacts with hair keratins. Expressed in skin during two hair growth cycles. Expression restricted to the cortical cells of hair follicles, appearing first in the cortical cells processing the flat nuclei located a few cells above the dermal papilla.

Functionally, in the hair cortex, hair keratin intermediate filaments are embedded in an interfilamentous matrix, consisting of hair keratin-associated proteins (KRTAP), which are essential for the formation of a rigid and resistant hair shaft through their extensive disulfide bond cross-linking with abundant cysteine residues of hair keratins. The matrix proteins include the high-sulfur and high-glycine-tyrosine keratins. The polypeptide is Keratin-associated protein 19-5 (Krtap19-5) (Mus musculus (Mouse)).